A 331-amino-acid chain; its full sequence is uncharacterized protein (331 aa).

7 Pentapeptide repeat domains span residues 20–59 (LKLP…NLGQ), 60–99 (ANLV…ILRD), 100–139 (SDMT…NMRQ), 151–190 (AILG…DLRK), 191–230 (ADLS…KISE), 231–270 (AEMT…DLSR), and 271–310 (ANLT…DLMS).

This is an uncharacterized protein from Synechocystis sp. (strain ATCC 27184 / PCC 6803 / Kazusa).